The chain runs to 445 residues: 2-oxoisovalerate dehydrogenase subunit alpha, mitochondrial (445 aa).

Residues 1 to 45 (MAVAIAAARVWRPNRGLSQAALLLLWRPGARGLARSHPHRQQQQF) constitute a mitochondrion transit peptide. Positions 158 and 159 each coordinate thiamine diphosphate. Ser206 is a binding site for K(+). Residue Ser207 coordinates thiamine diphosphate. 3 residues coordinate K(+): Pro208, Thr211, and Gln212. Glu238 lines the Mg(2+) pocket. Thiamine diphosphate is bound by residues Gly239, Ala240, and Arg265. The Mg(2+) site is built by Asn267 and Tyr269. A thiamine diphosphate-binding site is contributed by His336. Ser337 carries the phosphoserine; by BCKDK modification. The residue at position 338 (Thr338) is a Phosphothreonine. A phosphoserine mark is found at Ser339 and Ser347. Lys356 carries the post-translational modification N6-acetyllysine; alternate. Lys356 is modified (N6-succinyllysine; alternate). Lys380 carries the post-translational modification N6-succinyllysine.

This sequence belongs to the BCKDHA family. Heterotetramer of 2 alpha/BCKDHA and 2 beta chains/BCKDHB that forms the branched-chain alpha-keto acid decarboxylase (E1) component of the BCKD complex. The branched-chain alpha-ketoacid dehydrogenase is a large complex composed of three major building blocks E1, E2 and E3. It is organized around E2, a 24-meric cubic core composed of DBT, to which are associated 6 to 12 copies of E1, and approximately 6 copies of the dehydrogenase E3, a DLD dimer. Interacts with PPM1K. Thiamine diphosphate is required as a cofactor. It depends on Mg(2+) as a cofactor. In terms of processing, phosphorylated at Ser-337 by BCKDK and dephosphorylated by protein phosphatase PPM1K.

The protein resides in the mitochondrion matrix. It catalyses the reaction N(6)-[(R)-lipoyl]-L-lysyl-[protein] + 3-methyl-2-oxobutanoate + H(+) = N(6)-[(R)-S(8)-2-methylpropanoyldihydrolipoyl]-L-lysyl-[protein] + CO2. Its function is as follows. Together with BCKDHB forms the heterotetrameric E1 subunit of the mitochondrial branched-chain alpha-ketoacid dehydrogenase (BCKD) complex. The BCKD complex catalyzes the multi-step oxidative decarboxylation of alpha-ketoacids derived from the branched-chain amino-acids valine, leucine and isoleucine producing CO2 and acyl-CoA which is subsequently utilized to produce energy. The E1 subunit catalyzes the first step with the decarboxylation of the alpha-ketoacid forming an enzyme-product intermediate. A reductive acylation mediated by the lipoylamide cofactor of E2 extracts the acyl group from the E1 active site for the next step of the reaction. The polypeptide is 2-oxoisovalerate dehydrogenase subunit alpha, mitochondrial (BCKDHA) (Macaca fascicularis (Crab-eating macaque)).